Reading from the N-terminus, the 706-residue chain is Zinc finger CCCH domain-containing protein 56 (706 aa).

ANK repeat units follow at residues 83 to 113 (EQRT…ELNL) and 118 to 150 (DKST…DPNI). Residues 211–221 (SSLLSLDSVSS) are compositionally biased toward low complexity. The segment at 211 to 235 (SSLLSLDSVSSPTKPHGTDVTFASE) is disordered. 2 C3H1-type zinc fingers span residues 302–324 (PCPD…HGVF) and 332–356 (QYRT…HANE). Disordered regions lie at residues 396-427 (PSAA…QQNI), 545-616 (SPKN…QTHG), and 652-692 (QMLK…TRES). Polar residues-rich tracts occupy residues 397-427 (SAAQ…QQNI) and 545-560 (SPKN…QASS). Ser-568 carries the post-translational modification Phosphoserine. The segment covering 580–592 (SRSLSSRDFGSSL) has biased composition (low complexity). Composition is skewed to polar residues over residues 600 to 616 (DSGS…QTHG), 652 to 667 (QMLK…NRVV), and 677 to 686 (QGGSSVNPHN).

This is Zinc finger CCCH domain-containing protein 56 from Arabidopsis thaliana (Mouse-ear cress).